The primary structure comprises 850 residues: Adenylate cyclase (850 aa).

The segment at 1 to 535 (MYLYIETLKQ…DISHHFPLRL (535 aa)) is catalytic. The interval 541 to 850 (KALYSPCEIR…SLPTKQCQLH (310 aa)) is regulatory.

It belongs to the adenylyl cyclase class-1 family.

It is found in the cytoplasm. It carries out the reaction ATP = 3',5'-cyclic AMP + diphosphate. Its activity is regulated as follows. The regulatory domain is involved in the regulation of cyclase activity by the carbon source. This Yersinia pestis protein is Adenylate cyclase (cya).